A 411-amino-acid polypeptide reads, in one-letter code: F-box/kelch-repeat protein At3g61590 (411 aa).

Positions 37 to 83 (FSMDSLLPDDLLERILSFLPIASIFRAGTVCKRWNEIVSSRRFLCNF) constitute an F-box domain. Kelch repeat units follow at residues 81–135 (CNFS…SSCG), 137–178 (VCFM…MSTS), 196–246 (SIVK…ICNN), 251–299 (MIYS…LMNL), 302–350 (RLVI…EFDE), and 352–401 (FASS…FTGF).

Part of a SCF (ASK-cullin-F-box) protein ligase complex. Interacts with SKP1A/ASK1, SKP1B/ASK2, ASK3, ASK9, ASK11, ASK12, ASK13, ASK14, ASK16 and ASK18.

The protein operates within protein modification; protein ubiquitination. In terms of biological role, component of SCF(ASK-cullin-F-box) E3 ubiquitin ligase complexes, which may mediate the ubiquitination and subsequent proteasomal degradation of target proteins. This is F-box/kelch-repeat protein At3g61590 from Arabidopsis thaliana (Mouse-ear cress).